We begin with the raw amino-acid sequence, 145 residues long: D-aminoacyl-tRNA deacylase (145 aa).

The short motif at 137 to 138 is the Gly-cisPro motif, important for rejection of L-amino acids element; sequence GP.

The protein belongs to the DTD family. As to quaternary structure, homodimer.

Its subcellular location is the cytoplasm. It catalyses the reaction glycyl-tRNA(Ala) + H2O = tRNA(Ala) + glycine + H(+). It carries out the reaction a D-aminoacyl-tRNA + H2O = a tRNA + a D-alpha-amino acid + H(+). Functionally, an aminoacyl-tRNA editing enzyme that deacylates mischarged D-aminoacyl-tRNAs. Also deacylates mischarged glycyl-tRNA(Ala), protecting cells against glycine mischarging by AlaRS. Acts via tRNA-based rather than protein-based catalysis; rejects L-amino acids rather than detecting D-amino acids in the active site. By recycling D-aminoacyl-tRNA to D-amino acids and free tRNA molecules, this enzyme counteracts the toxicity associated with the formation of D-aminoacyl-tRNA entities in vivo and helps enforce protein L-homochirality. The polypeptide is D-aminoacyl-tRNA deacylase (Escherichia coli O7:K1 (strain IAI39 / ExPEC)).